A 162-amino-acid chain; its full sequence is Probable chemoreceptor glutamine deamidase CheD (162 aa).

Belongs to the CheD family.

It carries out the reaction L-glutaminyl-[protein] + H2O = L-glutamyl-[protein] + NH4(+). In terms of biological role, probably deamidates glutamine residues to glutamate on methyl-accepting chemotaxis receptors (MCPs), playing an important role in chemotaxis. In Caldanaerobacter subterraneus subsp. tengcongensis (strain DSM 15242 / JCM 11007 / NBRC 100824 / MB4) (Thermoanaerobacter tengcongensis), this protein is Probable chemoreceptor glutamine deamidase CheD.